Reading from the N-terminus, the 267-residue chain is L-aspartate dehydrogenase (267 aa).

NAD(+) contacts are provided by Ala124 and Asn190. Residue His220 is part of the active site.

The protein belongs to the L-aspartate dehydrogenase family.

It catalyses the reaction L-aspartate + NADP(+) + H2O = oxaloacetate + NH4(+) + NADPH + H(+). The catalysed reaction is L-aspartate + NAD(+) + H2O = oxaloacetate + NH4(+) + NADH + H(+). It functions in the pathway cofactor biosynthesis; NAD(+) biosynthesis; iminoaspartate from L-aspartate (dehydrogenase route): step 1/1. In terms of biological role, specifically catalyzes the NAD or NADP-dependent dehydrogenation of L-aspartate to iminoaspartate. This chain is L-aspartate dehydrogenase, found in Pseudomonas aeruginosa (strain ATCC 15692 / DSM 22644 / CIP 104116 / JCM 14847 / LMG 12228 / 1C / PRS 101 / PAO1).